The primary structure comprises 29 residues: uncharacterized protein (29 aa).

This is an uncharacterized protein from Haloarcula hispanica (His1V).